Here is a 296-residue protein sequence, read N- to C-terminus: Protease HtpX homolog (296 aa).

A run of 2 helical transmembrane segments spans residues 7-27 (TVLL…LVAG) and 29-49 (QGMI…YFFS). Histidine 131 is a Zn(2+) binding site. Glutamate 132 is an active-site residue. Zn(2+) is bound at residue histidine 135. The next 2 membrane-spanning stretches (helical) occupy residues 141–161 (ILIS…ANMA) and 178–198 (IASI…ATLI). A Zn(2+)-binding site is contributed by glutamate 207.

This sequence belongs to the peptidase M48B family. It depends on Zn(2+) as a cofactor.

It is found in the cell inner membrane. The polypeptide is Protease HtpX homolog (Sulfurihydrogenibium sp. (strain YO3AOP1)).